The following is a 154-amino-acid chain: 17 kDa surface antigen (154 aa).

Residues 1-19 form the signal peptide; that stretch reads MKLLSKIMIIALAASMLQA. A lipid anchor (N-palmitoyl cysteine) is attached at cysteine 20. Cysteine 20 is lipidated: S-diacylglycerol cysteine.

The protein belongs to the rickettsiale 17 kDa surface antigen family.

It is found in the cell outer membrane. The protein is 17 kDa surface antigen (omp) of Rickettsia rhipicephali.